Reading from the N-terminus, the 563-residue chain is Arginine--tRNA ligase (563 aa).

The protein belongs to the class-I aminoacyl-tRNA synthetase family. Monomer.

The catalysed reaction is tRNA(Arg) + L-arginine + ATP = L-arginyl-tRNA(Arg) + AMP + diphosphate. The sequence is that of Arginine--tRNA ligase from Encephalitozoon cuniculi (strain GB-M1) (Microsporidian parasite).